We begin with the raw amino-acid sequence, 911 residues long: Zinc finger protein 721 (911 aa).

Residues F69 to H91 form a C2H2-type 1; degenerate zinc finger. The C2H2-type 2 zinc finger occupies F97–H119. The C2H2-type 3; degenerate zinc-finger motif lies at Y125–H147. A C2H2-type 4 zinc finger spans residues Y153–H175. The C2H2-type 5; degenerate zinc finger occupies Y181–H203. C2H2-type zinc fingers lie at residues Y209–H231, Y237–H259, F265–H287, Y293–H315, Y321–H343, Y349–H371, and Y377–H399. A C2H2-type 13; degenerate zinc finger spans residues Y405–H427. 6 consecutive C2H2-type zinc fingers follow at residues Y433–H455, Y461–H483, F489–H511, Y517–H539, Y545–H567, and Y573–H595. K478 participates in a covalent cross-link: Glycyl lysine isopeptide (Lys-Gly) (interchain with G-Cter in SUMO2). The segment at Y601–Y623 adopts a C2H2-type 20; degenerate zinc-finger fold. The C2H2-type 21; degenerate zinc finger occupies Y629–L651. K649 is covalently cross-linked (Glycyl lysine isopeptide (Lys-Gly) (interchain with G-Cter in SUMO2)). C2H2-type zinc fingers lie at residues Y657–H679 and Y685–H707. The segment at Y713–H735 adopts a C2H2-type 24; degenerate zinc-finger fold. 6 consecutive C2H2-type zinc fingers follow at residues Y741–H763, Y769–H791, F797–H819, Y825–H847, Y853–H875, and Y881–H903. K786 is covalently cross-linked (Glycyl lysine isopeptide (Lys-Gly) (interchain with G-Cter in SUMO2)).

Belongs to the krueppel C2H2-type zinc-finger protein family.

It is found in the nucleus. Functionally, may be involved in transcriptional regulation. This Homo sapiens (Human) protein is Zinc finger protein 721 (ZNF721).